The chain runs to 44 residues: Alpha-amylase inhibitor WDAI-3 (44 aa).

A disulfide bond links Cys20 and Cys41.

It belongs to the protease inhibitor I6 (cereal trypsin/alpha-amylase inhibitor) family. Homodimer. In terms of processing, the disulfide bonds are essential for the inhibitor activity. In terms of tissue distribution, endosperm.

Its subcellular location is the secreted. Alpha-amylase inhibitor. In Triticum aestivum (Wheat), this protein is Alpha-amylase inhibitor WDAI-3 (IHA-B1-2).